We begin with the raw amino-acid sequence, 446 residues long: tRNA modification GTPase MnmE (446 aa).

(6S)-5-formyl-5,6,7,8-tetrahydrofolate contacts are provided by R28, E85, and K124. The TrmE-type G domain maps to 220–372 (GLTVVLVGQP…LRAKLLQAAG (153 aa)). N230 contacts K(+). Residues 230 to 235 (NVGKSS), 249 to 255 (TEIAGTT), and 274 to 277 (DTAG) contribute to the GTP site. Position 234 (S234) interacts with Mg(2+). K(+) is bound by residues T249, I251, and T254. T255 contacts Mg(2+). K446 is a (6S)-5-formyl-5,6,7,8-tetrahydrofolate binding site.

Belongs to the TRAFAC class TrmE-Era-EngA-EngB-Septin-like GTPase superfamily. TrmE GTPase family. In terms of assembly, homodimer. Heterotetramer of two MnmE and two MnmG subunits. The cofactor is K(+).

It is found in the cytoplasm. Functionally, exhibits a very high intrinsic GTPase hydrolysis rate. Involved in the addition of a carboxymethylaminomethyl (cmnm) group at the wobble position (U34) of certain tRNAs, forming tRNA-cmnm(5)s(2)U34. The chain is tRNA modification GTPase MnmE from Thiobacillus denitrificans (strain ATCC 25259 / T1).